We begin with the raw amino-acid sequence, 901 residues long: Sperm-associated antigen 1 (901 aa).

3 TPR repeats span residues 213 to 246 (ANREKGKGNEAFYSGDYEEAVMYYTRSLSALPTA), 247 to 279 (IAYNNRAQAEIKLQRWSSALEDCEKALELDPGN), and 280 to 313 (VKALLRRATTYKHQNKLQEAVDDLRKVLQVEPDN). Residues 322-437 (EVERDLKNSE…DNPSGLKRRG (116 aa)) form a disordered region. Phosphoserine occurs at positions 351 and 359. TPR repeat units follow at residues 430–464 (PSGLKRRGNELFRGGQFAEAAAQYSVAIAQLEPTG), 472–505 (SILYSNRAACYLKEGNCRDCIQDCNRALELHPFS), 507–539 (KPLLRRAMAYETLEQYRNAYVDYKTVLQIDCGI), 606–639 (FQALKEEGNQLVKDKNYKDAISKYNECLKINSKA), and 640–673 (CAIYTNRALCYLKLGQFEEAKLDCEQALQIDGEN). A disordered region spans residues 694 to 776 (GVDPSQVLLS…AEPAEKLDVS (83 aa)). Position 703 is a phosphoserine (serine 703). Positions 708–717 (EAARHLDTKN) are enriched in basic and acidic residues. Residues serine 739 and serine 740 each carry the phosphoserine modification. Residue 756 to 763 (PARDGVED) coordinates GTP. Serine 766 is subject to Phosphoserine.

Detected in cerebellum, tongue, esophagus, forestomach, sperm and testis.

The protein resides in the cytoplasm. Its subcellular location is the dynein axonemal particle. Its function is as follows. May play a role in the cytoplasmic assembly of the ciliary dynein arms. May play a role in fertilization. Binds GTP and has GTPase activity. The protein is Sperm-associated antigen 1 (Spag1) of Mus musculus (Mouse).